Consider the following 274-residue polypeptide: Sulfur carrier protein FdhD (274 aa).

Cys121 functions as the Cysteine persulfide intermediate in the catalytic mechanism. Position 258 to 263 (258 to 263 (FSKPGR)) interacts with Mo-bis(molybdopterin guanine dinucleotide).

This sequence belongs to the FdhD family.

It localises to the cytoplasm. In terms of biological role, required for formate dehydrogenase (FDH) activity. Acts as a sulfur carrier protein that transfers sulfur from IscS to the molybdenum cofactor prior to its insertion into FDH. This is Sulfur carrier protein FdhD from Yersinia pseudotuberculosis serotype O:3 (strain YPIII).